Consider the following 218-residue polypeptide: Adenylate kinase (218 aa).

Residue 10 to 15 (GAGKGT) coordinates ATP. An NMP region spans residues 30 to 59 (STGDMLRAAVKAGTPLGQQAKAVMDAGQLV). Residues Thr31, Arg36, 57 to 59 (QLV), 85 to 88 (GFPR), and Gln92 contribute to the AMP site. The tract at residues 122 to 159 (GRRSHPASGRTYHVKFNPPKVEGQDDVTGEPLVQREDD) is LID. ATP is bound by residues Arg123 and 132–133 (TY). Positions 127–151 (PASGRTYHVKFNPPKVEGQDDVTGE) are disordered. AMP is bound by residues Arg156 and Arg167. Residue Gly203 coordinates ATP.

The protein belongs to the adenylate kinase family. Monomer.

Its subcellular location is the cytoplasm. The enzyme catalyses AMP + ATP = 2 ADP. It functions in the pathway purine metabolism; AMP biosynthesis via salvage pathway; AMP from ADP: step 1/1. In terms of biological role, catalyzes the reversible transfer of the terminal phosphate group between ATP and AMP. Plays an important role in cellular energy homeostasis and in adenine nucleotide metabolism. This Delftia acidovorans (strain DSM 14801 / SPH-1) protein is Adenylate kinase.